The following is a 1140-amino-acid chain: DNA damage-binding protein 1 (1140 aa).

It belongs to the DDB1 family. Component of the UV-DDB complex which includes DDB1 and DDB2; the heterodimer dimerizes to give rise to a heterotetramer when bound to damaged DNA. The UV-DDB complex interacts with monoubiquitinated histone H2A and binds to XPC via the DDB2 subunit. Component of numerous DCX (DDB1-CUL4-X-box) E3 ubiquitin-protein ligase complexes which consist of a core of DDB1, CUL4A or CUL4B and RBX1. DDB1 may recruit specific substrate targeting subunits to the DCX complex. These substrate targeting subunits are generally known as DCAF (DDB1- and CUL4-associated factor) or CDW (CUL4-DDB1-associated WD40-repeat) proteins. Interacts with Fbw5 and gig. May interact with ohgt.

It is found in the cytoplasm. It localises to the nucleus. It participates in protein modification; protein ubiquitination. Protein, which is both involved in DNA repair and protein ubiquitination, as part of the UV-DDB complex and DCX (DDB1-CUL4-X-box) complexes, respectively. Core component of the UV-DDB complex (UV-damaged DNA-binding protein complex), a complex that recognizes UV-induced DNA damage and recruit proteins of the nucleotide excision repair pathway (the NER pathway) to initiate DNA repair. The UV-DDB complex preferentially binds to cyclobutane pyrimidine dimers (CPD), 6-4 photoproducts (6-4 PP), apurinic sites and short mismatches. Also functions as a component of numerous distinct DCX (DDB1-CUL4-X-box) E3 ubiquitin-protein ligase complexes which mediate the ubiquitination and subsequent proteasomal degradation of target proteins. The functional specificity of the DCX E3 ubiquitin-protein ligase complex is determined by the variable substrate recognition component recruited by DDB1. Required for degradation of gig. Required for genomic stability in the face of endogenous DNA lesions and for the response to MMS-induced DNA damage. Required for normal wing development. The protein is DNA damage-binding protein 1 (pic) of Drosophila melanogaster (Fruit fly).